The chain runs to 494 residues: Integrin beta-like protein 1 (494 aa).

A signal peptide spans 1-23 (MHPPGFKNFLLLVSSLFFIGLSA). Disulfide bonds link Cys40/Cys71, Cys51/Cys69, Cys63/Cys74, Cys76/Cys89, Cys91/Cys112, Cys96/Cys110, Cys104/Cys115, Cys117/Cys126, Cys132/Cys159, Cys143/Cys157, Cys151/Cys162, Cys164/Cys178, Cys180/Cys202, Cys185/Cys200, Cys194/Cys205, Cys207/Cys216, Cys220/Cys247, Cys231/Cys245, Cys239/Cys250, Cys252/Cys269, Cys271/Cys296, Cys276/Cys294, Cys288/Cys299, Cys301/Cys310, Cys316/Cys343, Cys327/Cys341, Cys335/Cys346, Cys348/Cys361, Cys363/Cys384, Cys368/Cys382, Cys376/Cys387, Cys389/Cys398, Cys404/Cys431, Cys415/Cys429, Cys423/Cys434, Cys436/Cys448, Cys450/Cys471, Cys455/Cys469, Cys463/Cys474, and Cys476/Cys485. I-EGF domains are found at residues 40-90 (CRLS…PLCE), 91-127 (CHDWVCETYDGKTCAGHGTCDCGKCKCDVGWSGEACQ), 132-179 (CDLT…KFCE), 180-217 (CDDRECIDDETEEICGGHGKCYCGNCYCEAGWHGDKCE), 220-270 (CDIT…DTCE), 271-311 (CDER…KKCE), 316-362 (CPLS…KTCE), 363-399 (CDDRRCEDLDGVVCGGRGTCSCGRCVCEKGWFGKLCQ), 404-449 (CNMT…EFCD), and 450-486 (CDDRDCDKHDGLICTGNGICSCGNCECWDGWNGNACE). An I repeat occupies 51 to 95 (CRAPGQPPGSALCHDRGRCECGVCICHVTEPGTYFGPLCECHDWV). The tract at residues 51-494 (CRAPGQPPGS…CEIWLGTEYP (444 aa)) is cysteine-rich tandem repeats. Residues 96–142 (CETYDGKTCAGHGTCDCGKCKCDVGWSGEACQYPTKCDLTKKISNQM) form an II repeat. Residues 143-184 (CKNSQDVICSNAGTCHCGRCKCDNSDGHGLIYGKFCECDDRE) form an III repeat. An IV repeat occupies 185–230 (CIDDETEEICGGHGKCYCGNCYCEAGWHGDKCEFQCDITPWESKRR). A V repeat occupies 231–275 (CTSPDGKVCSNRGTCVCGECSCHDVDPTGDWGDIHGDTCECDERD). Residues 276 to 326 (CRAVYDRYSDDFCSGHGQCNCGRCDCRAGWYGKKCEHPKNCPLSAEESTRK) form a VI repeat. The stretch at 327–367 (CQGSSDLPCSGRGRCECGRCTCYPPGDSRVYGKTCECDDRR) is one VII repeat. Residues 368-414 (CEDLDGVVCGGRGTCSCGRCVCEKGWFGKLCQHPRKCNMTEEQSRSL) form a VIII repeat. An N-linked (GlcNAc...) asparagine glycan is attached at Asn405. One copy of the IX repeat lies at 415 to 454 (CESADGTLCSGKGSCHCGKCICSGEEWYISGEFCDCDDRD). Residues 455–494 (CDKHDGLICTGNGICSCGNCECWDGWNGNACEIWLGTEYP) form a X repeat.

Its subcellular location is the secreted. The chain is Integrin beta-like protein 1 (Itgbl1) from Rattus norvegicus (Rat).